Reading from the N-terminus, the 548-residue chain is CTP synthase (548 aa).

The interval 1–267 (MKTKFIFITG…DQKIAIMLQL (267 aa)) is amidoligase domain. CTP is bound at residue serine 14. Serine 14 serves as a coordination point for UTP. ATP contacts are provided by residues 15-20 (SLGKGL) and aspartate 72. Aspartate 72 and glutamate 141 together coordinate Mg(2+). CTP contacts are provided by residues 148-150 (DIE), 188-193 (KTKPTQ), and lysine 224. UTP-binding positions include 188–193 (KTKPTQ) and lysine 224. The region spanning 292 to 545 (TIGIVGKYVD…IKAAGKQAVK (254 aa)) is the Glutamine amidotransferase type-1 domain. Glycine 354 contributes to the L-glutamine binding site. Cysteine 381 acts as the Nucleophile; for glutamine hydrolysis in catalysis. L-glutamine is bound by residues 382–385 (LGMQ), glutamate 405, and arginine 473. Active-site residues include histidine 518 and glutamate 520.

It belongs to the CTP synthase family. In terms of assembly, homotetramer.

It carries out the reaction UTP + L-glutamine + ATP + H2O = CTP + L-glutamate + ADP + phosphate + 2 H(+). The catalysed reaction is L-glutamine + H2O = L-glutamate + NH4(+). The enzyme catalyses UTP + NH4(+) + ATP = CTP + ADP + phosphate + 2 H(+). Its pathway is pyrimidine metabolism; CTP biosynthesis via de novo pathway; CTP from UDP: step 2/2. With respect to regulation, allosterically activated by GTP, when glutamine is the substrate; GTP has no effect on the reaction when ammonia is the substrate. The allosteric effector GTP functions by stabilizing the protein conformation that binds the tetrahedral intermediate(s) formed during glutamine hydrolysis. Inhibited by the product CTP, via allosteric rather than competitive inhibition. Functionally, catalyzes the ATP-dependent amination of UTP to CTP with either L-glutamine or ammonia as the source of nitrogen. Regulates intracellular CTP levels through interactions with the four ribonucleotide triphosphates. This is CTP synthase from Oleidesulfovibrio alaskensis (strain ATCC BAA-1058 / DSM 17464 / G20) (Desulfovibrio alaskensis).